A 124-amino-acid chain; its full sequence is Fluoride-specific ion channel FluC (124 aa).

Helical transmembrane passes span 1–21 (MGVV…RFLL), 35–55 (VGTL…FAYL), 68–88 (LLIT…YESF), and 99–119 (FLAY…LGYI). Na(+)-binding residues include Gly75 and Thr78.

Belongs to the fluoride channel Fluc/FEX (TC 1.A.43) family.

It localises to the cell inner membrane. It catalyses the reaction fluoride(in) = fluoride(out). Na(+) is not transported, but it plays an essential structural role and its presence is essential for fluoride channel function. In terms of biological role, fluoride-specific ion channel. Important for reducing fluoride concentration in the cell, thus reducing its toxicity. This chain is Fluoride-specific ion channel FluC, found in Aquifex aeolicus (strain VF5).